Here is a 312-residue protein sequence, read N- to C-terminus: Taste receptor type 2 member 140 (312 aa).

Topologically, residues 1–9 (MKVTVECAL) are extracellular. A helical membrane pass occupies residues 10 to 30 (LITLIVEIIIGCLGNGFIAVV). Topologically, residues 31–46 (NIMDWTKRRRFSLVDQ) are cytoplasmic. The helical transmembrane segment at 47-67 (ILTALAISRLAFVWSLLTVLV) threads the bilayer. Over 68–87 (ISELHSSLLITRKMLRIINN) the chain is Extracellular. A helical membrane pass occupies residues 88–108 (FWTVTNHFSIWLATCLSIFYF). Residues 109-133 (LKIANFSNSIFLSLRWRVKTVVSLT) lie on the Cytoplasmic side of the membrane. Residues 134 to 154 (LLVSLLLLLVNVIIINTCIVI) form a helical membrane-spanning segment. Residues 155 to 185 (SVEGYKVNMSYSSHFNNNPQISRIPLFTNTM) lie on the Extracellular side of the membrane. N-linked (GlcNAc...) asparagine glycosylation occurs at asparagine 162. The chain crosses the membrane as a helical span at residues 186–206 (FTFIPFTVTLTIFLLLIFSLW). Residues 207–229 (RHLKKMQHRAKGPRDPSTTAHIK) lie on the Cytoplasmic side of the membrane. A helical transmembrane segment spans residues 230-250 (ALQMVVTFLFLYTIFFLALVM). Over 251-264 (QAWNNEIQSKTVFN) the chain is Extracellular. A helical transmembrane segment spans residues 265–285 (LVFESIALAFPSGHSCVLILG). Residues 286–312 (NSKLRQAFLTIIWWLRSSFNAAELSSP) lie on the Cytoplasmic side of the membrane.

Belongs to the G-protein coupled receptor T2R family.

The protein resides in the membrane. In terms of biological role, putative taste receptor which may play a role in the perception of bitterness. The polypeptide is Taste receptor type 2 member 140 (Rattus norvegicus (Rat)).